Consider the following 211-residue polypeptide: Histidine biosynthesis bifunctional protein HisIE (211 aa).

The tract at residues 1 to 122 is phosphoribosyl-AMP cyclohydrolase; that stretch reads MSFKAAEVSS…DAQEESQMVW (122 aa). The interval 123–211 is phosphoribosyl-ATP pyrophosphohydrolase; the sequence is LHQLEQLLAA…VVNKLKERHK (89 aa).

The protein in the N-terminal section; belongs to the PRA-CH family. This sequence in the C-terminal section; belongs to the PRA-PH family.

It localises to the cytoplasm. The catalysed reaction is 1-(5-phospho-beta-D-ribosyl)-ATP + H2O = 1-(5-phospho-beta-D-ribosyl)-5'-AMP + diphosphate + H(+). It catalyses the reaction 1-(5-phospho-beta-D-ribosyl)-5'-AMP + H2O = 1-(5-phospho-beta-D-ribosyl)-5-[(5-phospho-beta-D-ribosylamino)methylideneamino]imidazole-4-carboxamide. Its pathway is amino-acid biosynthesis; L-histidine biosynthesis; L-histidine from 5-phospho-alpha-D-ribose 1-diphosphate: step 2/9. The protein operates within amino-acid biosynthesis; L-histidine biosynthesis; L-histidine from 5-phospho-alpha-D-ribose 1-diphosphate: step 3/9. The chain is Histidine biosynthesis bifunctional protein HisIE from Vibrio parahaemolyticus serotype O3:K6 (strain RIMD 2210633).